Here is a 1052-residue protein sequence, read N- to C-terminus: Eukaryotic translation initiation factor 3 subunit A (1052 aa).

Residues 325 to 505 form the PCI domain; that stretch reads IQYAASAVLL…GSLHFNNNIF (181 aa). Coiled-coil stretches lie at residues 568–712 and 769–882; these read REHV…RLRE and EKTA…SAQT. 2 stretches are compositionally biased toward basic and acidic residues: residues 570-600 and 793-874; these read HVSNLSRRDEIEKQKEELEQSRRRRHQEQMQ and KIRL…EQEK. 2 disordered regions span residues 570–606 and 793–1052; these read HVSNLSRRDEIEKQKEELEQSRRRRHQEQMQKHHQNQ and KIRL…DDKN. Composition is skewed to polar residues over residues 875–887 and 895–906; these read LSNLSAQTSQPTW and APTTAAPSSMRV. Basic and acidic residues-rich tracts occupy residues 942-952, 960-970, 979-1013, and 1037-1052; these read DRGDRAPRDTG, RAPRDFSGRSEPSRSGPRDFSGRSEAGRTSGERRA, and GSERRVNIPSRGDDKN.

Belongs to the eIF-3 subunit A family. In terms of assembly, component of the eukaryotic translation initiation factor 3 (eIF-3) complex.

The protein localises to the cytoplasm. RNA-binding component of the eukaryotic translation initiation factor 3 (eIF-3) complex, which is involved in protein synthesis of a specialized repertoire of mRNAs and, together with other initiation factors, stimulates binding of mRNA and methionyl-tRNAi to the 40S ribosome. The eIF-3 complex specifically targets and initiates translation of a subset of mRNAs involved in cell proliferation. The protein is Eukaryotic translation initiation factor 3 subunit A of Monosiga brevicollis (Choanoflagellate).